A 667-amino-acid chain; its full sequence is E3 ubiquitin-protein ligase Midline-1 (667 aa).

Residues 10–60 form an RING-type zinc finger; it reads CPICLELLEDPLLLPCAHSLCFNCAHRILVSHCATNEPVESINAFQCPTCR. 2 positions are modified to phosphoserine: S92 and S96. 2 consecutive B box-type zinc fingers follow at residues 116 to 165 and 172 to 212; these read KVLC…IEPI and GLMC…VAAL. C119, C122, C134, C137, C142, C145, H150, H159, C175, H178, C198, and H204 together coordinate Zn(2+). Residues 205-264 adopt a coiled-coil conformation; that stretch reads RDHQVAALSERYDKLKQNLESNLTNLIKRNTELETLLAKLIQTCQHVEVNASRQEAKLTE. One can recognise a COS domain in the interval 320 to 379; sequence LKENDHARFLQTAKNITERVSMATASSQVLIPEINLNDTFDTFALDFSREKKLLECLDYL. In terms of domain architecture, Fibronectin type-III spans 381-484; the sequence is APNPPTIREE…EPGKLKTNSQ (104 aa). The segment covering 471 to 485 has biased composition (polar residues); the sequence is SRSSEPGKLKTNSQP. The interval 471-524 is disordered; sequence SRSSEPGKLKTNSQPFKLDPKSAHRKLKVSHDNLTVERDESSSKKSHTPERFTS. One can recognise a B30.2/SPRY domain in the interval 482 to 659; it reads NSQPFKLDPK…IITGLPIPDH (178 aa). The span at 499–520 shows a compositional bias: basic and acidic residues; that stretch reads VSHDNLTVERDESSSKKSHTPE. S511 carries the phosphoserine modification.

This sequence belongs to the TRIM/RBCC family. Homodimer or heterodimer with MID2. Interacts with IGBP1.

It localises to the cytoplasm. The protein resides in the cytoskeleton. The catalysed reaction is S-ubiquitinyl-[E2 ubiquitin-conjugating enzyme]-L-cysteine + [acceptor protein]-L-lysine = [E2 ubiquitin-conjugating enzyme]-L-cysteine + N(6)-ubiquitinyl-[acceptor protein]-L-lysine.. In terms of biological role, has E3 ubiquitin ligase activity towards IGBP1, promoting its monoubiquitination, which results in deprotection of the catalytic subunit of protein phosphatase PP2A, and its subsequent degradation by polyubiquitination. In Mus spretus (Western Mediterranean mouse), this protein is E3 ubiquitin-protein ligase Midline-1 (Mid1).